Here is a 529-residue protein sequence, read N- to C-terminus: Intraflagellar transport protein 56 (529 aa).

A disordered region spans residues 1–21 (MLHNRMTTAFERSKEQEHEAA). Positions 11 to 21 (ERSKEQEHEAA) are enriched in basic and acidic residues. 6 TPR repeats span residues 57 to 90 (GNADLWIAYCNFHLGRHEEALEIYTALKKSKNPP), 154 to 187 (SADQMALAAVHFLRTHYQQALECYEEVLQVQPEC), 189 to 221 (AIYMHMALCYYKLGDYLKSEEFLMLYRENAEDS), 285 to 321 (SEARQNLVKLYIEKGQYEDAYKVVQSFEPAVSAEYTL), 359 to 392 (VLGRRAMAAAYFLTGEFEEASMYLESIADIPKES), and 428 to 461 (PVHRTWLGRLLIRAQRSAEAFDLYRDAEKNSLQT).

It belongs to the IFT56 family.

It is found in the cell projection. Its subcellular location is the cilium. The protein localises to the flagellum. It localises to the cytoplasm. The protein resides in the cytoskeleton. It is found in the flagellum axoneme. Its subcellular location is the flagellum basal body. Functionally, component of the intraflagellar transport complex B (IFT-B) involved in flagellar assembly. This is Intraflagellar transport protein 56 from Giardia intestinalis (strain ATCC 50803 / WB clone C6) (Giardia lamblia).